We begin with the raw amino-acid sequence, 1176 residues long: Translation initiation factor IF-2 (1176 aa).

Low complexity-rich tracts occupy residues 32 to 44, 57 to 79, 94 to 166, and 193 to 235; these read IAAKSHSSSISDS, ASPSQPTAPAAKPAPAKPAAGKS, APVA…AAPS, and KPTP…VKPT. Disordered stretches follow at residues 32 to 502 and 535 to 567; these read IAAK…QRQK and RPAKPKAQQRTAPKPVAAVRKRRKETARQRQRR. The span at 251-270 shows a compositional bias: pro residues; sequence APPPASTPRPAPSRPTPRPA. Low complexity-rich tracts occupy residues 388–409 and 439–469; these read GRPGAPTRPGAPTRPGMPGGMR and NRPTEAAGTATPPVARPTAPSAPRRPGFRPG. Over residues 478–492 the composition is skewed to basic and acidic residues; the sequence is GRPDWDDSAKLEALR. Over residues 553–567 the composition is skewed to basic residues; sequence VRKRRKETARQRQRR. The tr-type G domain occupies 668-840; that stretch reads RRPPVVTVMG…LLLVTEVEDL (173 aa). Residues 677–684 are G1; sequence GHVDHGKT. Residue 677–684 participates in GTP binding; that stretch reads GHVDHGKT. The tract at residues 702-706 is G2; sequence GITQH. Residues 727–730 are G3; the sequence is DTPG. Residues 727-731 and 781-784 contribute to the GTP site; these read DTPGH and NKID. The segment at 781-784 is G4; that stretch reads NKID. Residues 817 to 819 are G5; sequence SAI.

It belongs to the TRAFAC class translation factor GTPase superfamily. Classic translation factor GTPase family. IF-2 subfamily.

It localises to the cytoplasm. In terms of biological role, one of the essential components for the initiation of protein synthesis. Protects formylmethionyl-tRNA from spontaneous hydrolysis and promotes its binding to the 30S ribosomal subunits. Also involved in the hydrolysis of GTP during the formation of the 70S ribosomal complex. The protein is Translation initiation factor IF-2 of Synechococcus sp. (strain CC9902).